The primary structure comprises 259 residues: Methyltransferase afvD (259 aa).

It belongs to the class I-like SAM-binding methyltransferase superfamily.

The protein operates within secondary metabolite biosynthesis. Functionally, methyltransferase; part of the gene cluster that mediates the biosynthesis of aflavarin, a bicoumarin that exhibits anti-insectan activity against the fungivorous beetle C.hemipterus. The sequence is that of Methyltransferase afvD from Aspergillus flavus (strain ATCC 200026 / FGSC A1120 / IAM 13836 / NRRL 3357 / JCM 12722 / SRRC 167).